We begin with the raw amino-acid sequence, 791 residues long: Outer membrane protein assembly factor BamA (791 aa).

POTRA domains follow at residues 59–130 (NAIA…VTEK), 131–209 (PRID…VEEG), 212–298 (LYIK…VKEG), 301–383 (YKLG…IRKR), and 386–459 (VYIN…VKEQ).

It belongs to the BamA family. Part of the Bam complex.

The protein localises to the cell outer membrane. Part of the outer membrane protein assembly complex, which is involved in assembly and insertion of beta-barrel proteins into the outer membrane. The polypeptide is Outer membrane protein assembly factor BamA (Nitratidesulfovibrio vulgaris (strain ATCC 29579 / DSM 644 / CCUG 34227 / NCIMB 8303 / VKM B-1760 / Hildenborough) (Desulfovibrio vulgaris)).